Here is a 225-residue protein sequence, read N- to C-terminus: Uridylate kinase (225 aa).

An ATP-binding site is contributed by 9 to 10; it reads GS. Glycine 46 lines the UMP pocket. Positions 47 and 51 each coordinate ATP. Residues aspartate 67 and 115–121 contribute to the UMP site; that span reads THPAHTT. Positions 141, 142, 147, and 150 each coordinate ATP.

It belongs to the UMP kinase family. As to quaternary structure, homohexamer.

The protein resides in the cytoplasm. The catalysed reaction is UMP + ATP = UDP + ADP. It functions in the pathway pyrimidine metabolism; CTP biosynthesis via de novo pathway; UDP from UMP (UMPK route): step 1/1. With respect to regulation, inhibited by UTP. Catalyzes the reversible phosphorylation of UMP to UDP. The sequence is that of Uridylate kinase from Methanococcus maripaludis (strain C6 / ATCC BAA-1332).